A 291-amino-acid chain; its full sequence is Aspartate carbamoyltransferase catalytic subunit (291 aa).

Positions 47 and 48 each coordinate carbamoyl phosphate. Lys75 serves as a coordination point for L-aspartate. 3 residues coordinate carbamoyl phosphate: Arg97, His126, and Gln129. 2 residues coordinate L-aspartate: Arg159 and Arg213. Gly251 and Pro252 together coordinate carbamoyl phosphate.

Belongs to the aspartate/ornithine carbamoyltransferase superfamily. ATCase family. In terms of assembly, heterododecamer (2C3:3R2) of six catalytic PyrB chains organized as two trimers (C3), and six regulatory PyrI chains organized as three dimers (R2).

The enzyme catalyses carbamoyl phosphate + L-aspartate = N-carbamoyl-L-aspartate + phosphate + H(+). It functions in the pathway pyrimidine metabolism; UMP biosynthesis via de novo pathway; (S)-dihydroorotate from bicarbonate: step 2/3. Catalyzes the condensation of carbamoyl phosphate and aspartate to form carbamoyl aspartate and inorganic phosphate, the committed step in the de novo pyrimidine nucleotide biosynthesis pathway. The sequence is that of Aspartate carbamoyltransferase catalytic subunit from Aquifex aeolicus (strain VF5).